A 427-amino-acid chain; its full sequence is Trigger factor (427 aa).

One can recognise a PPIase FKBP-type domain in the interval 163–248 (GDTVVIDFVG…IHEVKAKEVP (86 aa)).

This sequence belongs to the FKBP-type PPIase family. Tig subfamily.

Its subcellular location is the cytoplasm. The enzyme catalyses [protein]-peptidylproline (omega=180) = [protein]-peptidylproline (omega=0). Functionally, involved in protein export. Acts as a chaperone by maintaining the newly synthesized protein in an open conformation. Functions as a peptidyl-prolyl cis-trans isomerase. The chain is Trigger factor from Streptococcus pneumoniae serotype 2 (strain D39 / NCTC 7466).